We begin with the raw amino-acid sequence, 438 residues long: Methylenetetrahydrofolate--tRNA-(uracil-5-)-methyltransferase TrmFO (438 aa).

Residue 9–14 coordinates FAD; the sequence is GGGLAG.

It belongs to the MnmG family. TrmFO subfamily. The cofactor is FAD.

The protein localises to the cytoplasm. The enzyme catalyses uridine(54) in tRNA + (6R)-5,10-methylene-5,6,7,8-tetrahydrofolate + NADH + H(+) = 5-methyluridine(54) in tRNA + (6S)-5,6,7,8-tetrahydrofolate + NAD(+). It carries out the reaction uridine(54) in tRNA + (6R)-5,10-methylene-5,6,7,8-tetrahydrofolate + NADPH + H(+) = 5-methyluridine(54) in tRNA + (6S)-5,6,7,8-tetrahydrofolate + NADP(+). Its function is as follows. Catalyzes the folate-dependent formation of 5-methyl-uridine at position 54 (M-5-U54) in all tRNAs. This chain is Methylenetetrahydrofolate--tRNA-(uracil-5-)-methyltransferase TrmFO, found in Lactobacillus gasseri (strain ATCC 33323 / DSM 20243 / BCRC 14619 / CIP 102991 / JCM 1131 / KCTC 3163 / NCIMB 11718 / NCTC 13722 / AM63).